Consider the following 219-residue polypeptide: Non-specific lipid transfer protein GPI-anchored 25 (219 aa).

The first 22 residues, methionine 1–alanine 22, serve as a signal peptide directing secretion. 4 disulfide bridges follow: cysteine 39–cysteine 85, cysteine 49–cysteine 68, cysteine 69–cysteine 110, and cysteine 83–cysteine 123. An N-linked (GlcNAc...) asparagine glycan is attached at asparagine 59. The N-linked (GlcNAc...) asparagine glycan is linked to asparagine 148. A disordered region spans residues serine 152–proline 181. Serine 192 carries the GPI-anchor amidated serine lipid modification. A propeptide spans serine 193–isoleucine 219 (removed in mature form).

It belongs to the plant LTP family.

Its subcellular location is the cell membrane. Probable lipid transfer protein. In Arabidopsis thaliana (Mouse-ear cress), this protein is Non-specific lipid transfer protein GPI-anchored 25.